Reading from the N-terminus, the 251-residue chain is Capsid protein (251 aa).

The Bipartite nuclear localization signal motif lies at 3 to 20 (KRDAPWRLTAGTAKISRT). A Nuclear localization signal motif is present at residues 35–49 (RASAWVNRPMYRKPR). A zinc finger lies at 63–80 (CEGPCKVQSFEQRHDVSH). The Nuclear export signal signature appears at 96–117 (ITHRVGKRFCVKSVYILGKIWM). The short motif at 195–242 (RRFWKVNNHVVYNHQEAGKYENHTENALLLYMACTHASNPVYATLKIR) is the Bipartite nuclear localization signal element.

Belongs to the geminiviridae capsid protein family. Homomultimer. Binds to single-stranded and double-stranded viral DNA. Interacts (via nuclear localization signals) with host importin alpha-1a.

The protein resides in the virion. Its subcellular location is the host nucleus. Its function is as follows. Encapsidates the viral DNA into characteristic twinned ('geminate') particles. Binds the genomic viral ssDNA and shuttles it into and out of the cell nucleus. The CP of bipartite geminiviruses is not required for cell-to-cell or systemic movement. In Capsicum annuum (Capsicum pepper), this protein is Capsid protein.